We begin with the raw amino-acid sequence, 304 residues long: Putative S-adenosyl-L-methionine-dependent methyltransferase Mmcs_1043 (304 aa).

Residues Asp-130 and Asp-159–Leu-160 each bind S-adenosyl-L-methionine.

Belongs to the UPF0677 family.

Functionally, exhibits S-adenosyl-L-methionine-dependent methyltransferase activity. The protein is Putative S-adenosyl-L-methionine-dependent methyltransferase Mmcs_1043 of Mycobacterium sp. (strain MCS).